The primary structure comprises 453 residues: Phosphoglucosamine mutase (453 aa).

Catalysis depends on Ser105, which acts as the Phosphoserine intermediate. Ser105, Asp244, Asp246, and Asp248 together coordinate Mg(2+). At Ser105 the chain carries Phosphoserine.

The protein belongs to the phosphohexose mutase family. Mg(2+) is required as a cofactor. Post-translationally, activated by phosphorylation.

It catalyses the reaction alpha-D-glucosamine 1-phosphate = D-glucosamine 6-phosphate. Functionally, catalyzes the conversion of glucosamine-6-phosphate to glucosamine-1-phosphate. The protein is Phosphoglucosamine mutase of Blochmanniella pennsylvanica (strain BPEN).